The sequence spans 460 residues: Chromosomal replication initiator protein DnaA (460 aa).

The interval 1-84 is domain I, interacts with DnaA modulators; sequence MAVSLWQQCI…RFDIGSRPSA (84 aa). Residues 84-123 form a domain II region; the sequence is AKKPEPAPVAAVRVPNPQTKASVGTSFNTTEPVANTNHRS. The interval 103 to 123 is disordered; the sequence is KASVGTSFNTTEPVANTNHRS. The segment at 124-340 is domain III, AAA+ region; the sequence is NINPTYQFDN…GALNRVIANA (217 aa). Residues glycine 168, glycine 170, lysine 171, and threonine 172 each contribute to the ATP site. Positions 341 to 460 are domain IV, binds dsDNA; that stretch reads NFTGRPITID…YANLIRTLSS (120 aa).

It belongs to the DnaA family. As to quaternary structure, oligomerizes as a right-handed, spiral filament on DNA at oriC.

The protein resides in the cytoplasm. In terms of biological role, plays an essential role in the initiation and regulation of chromosomal replication. ATP-DnaA binds to the origin of replication (oriC) to initiate formation of the DNA replication initiation complex once per cell cycle. Binds the DnaA box (a 9 base pair repeat at the origin) and separates the double-stranded (ds)DNA. Forms a right-handed helical filament on oriC DNA; dsDNA binds to the exterior of the filament while single-stranded (ss)DNA is stabiized in the filament's interior. The ATP-DnaA-oriC complex binds and stabilizes one strand of the AT-rich DNA unwinding element (DUE), permitting loading of DNA polymerase. After initiation quickly degrades to an ADP-DnaA complex that is not apt for DNA replication. Binds acidic phospholipids. The protein is Chromosomal replication initiator protein DnaA of Shewanella sp. (strain MR-4).